Consider the following 471-residue polypeptide: ATP synthase subunit beta (471 aa).

157 to 164 lines the ATP pocket; that stretch reads GGAGVGKT.

It belongs to the ATPase alpha/beta chains family. As to quaternary structure, F-type ATPases have 2 components, CF(1) - the catalytic core - and CF(0) - the membrane proton channel. CF(1) has five subunits: alpha(3), beta(3), gamma(1), delta(1), epsilon(1). CF(0) has three main subunits: a(1), b(2) and c(9-12). The alpha and beta chains form an alternating ring which encloses part of the gamma chain. CF(1) is attached to CF(0) by a central stalk formed by the gamma and epsilon chains, while a peripheral stalk is formed by the delta and b chains.

The protein resides in the cell inner membrane. The catalysed reaction is ATP + H2O + 4 H(+)(in) = ADP + phosphate + 5 H(+)(out). In terms of biological role, produces ATP from ADP in the presence of a proton gradient across the membrane. The catalytic sites are hosted primarily by the beta subunits. This is ATP synthase subunit beta from Trichlorobacter lovleyi (strain ATCC BAA-1151 / DSM 17278 / SZ) (Geobacter lovleyi).